A 334-amino-acid chain; its full sequence is Probable GTP 3',8-cyclase (334 aa).

Positions 24–256 (PYGRKVTGLR…RKKYIIDGVE (233 aa)) constitute a Radical SAM core domain. Arg-33 is a binding site for GTP. [4Fe-4S] cluster-binding residues include Cys-40 and Cys-44. Residue Tyr-46 coordinates S-adenosyl-L-methionine. Residue Cys-47 participates in [4Fe-4S] cluster binding. Lys-85 serves as a coordination point for GTP. S-adenosyl-L-methionine is bound at residue Gly-89. Thr-113 lines the GTP pocket. Ser-137 provides a ligand contact to S-adenosyl-L-methionine. Lys-176 is a GTP binding site. 2 residues coordinate [4Fe-4S] cluster: Cys-269 and Cys-272. 274 to 276 (RLR) serves as a coordination point for GTP. Position 286 (Cys-286) interacts with [4Fe-4S] cluster.

The protein belongs to the radical SAM superfamily. MoaA family. Requires [4Fe-4S] cluster as cofactor.

The enzyme catalyses GTP + AH2 + S-adenosyl-L-methionine = (8S)-3',8-cyclo-7,8-dihydroguanosine 5'-triphosphate + 5'-deoxyadenosine + L-methionine + A + H(+). It participates in cofactor biosynthesis; molybdopterin biosynthesis. Its function is as follows. Catalyzes the cyclization of GTP to (8S)-3',8-cyclo-7,8-dihydroguanosine 5'-triphosphate. The chain is Probable GTP 3',8-cyclase from Methanosarcina acetivorans (strain ATCC 35395 / DSM 2834 / JCM 12185 / C2A).